Consider the following 393-residue polypeptide: Formate-dependent phosphoribosylglycinamide formyltransferase (393 aa).

N(1)-(5-phospho-beta-D-ribosyl)glycinamide contacts are provided by residues 22-23 and E82; that span reads EL. Residues R114, K155, 160–165, 195–198, and E203 each bind ATP; these read SSGKGQ and EGFV. Residues 119–308 enclose the ATP-grasp domain; that stretch reads RLAAEELGLV…EFALHVRAIL (190 aa). Residues E267 and E279 each contribute to the Mg(2+) site. N(1)-(5-phospho-beta-D-ribosyl)glycinamide is bound by residues D286, K356, and 363-364; that span reads RR.

It belongs to the PurK/PurT family. Homodimer.

The catalysed reaction is N(1)-(5-phospho-beta-D-ribosyl)glycinamide + formate + ATP = N(2)-formyl-N(1)-(5-phospho-beta-D-ribosyl)glycinamide + ADP + phosphate + H(+). It participates in purine metabolism; IMP biosynthesis via de novo pathway; N(2)-formyl-N(1)-(5-phospho-D-ribosyl)glycinamide from N(1)-(5-phospho-D-ribosyl)glycinamide (formate route): step 1/1. Its function is as follows. Involved in the de novo purine biosynthesis. Catalyzes the transfer of formate to 5-phospho-ribosyl-glycinamide (GAR), producing 5-phospho-ribosyl-N-formylglycinamide (FGAR). Formate is provided by PurU via hydrolysis of 10-formyl-tetrahydrofolate. This chain is Formate-dependent phosphoribosylglycinamide formyltransferase, found in Solidesulfovibrio magneticus (strain ATCC 700980 / DSM 13731 / RS-1) (Desulfovibrio magneticus).